Consider the following 59-residue polypeptide: Large ribosomal subunit protein bL32c (59 aa).

Over residues M1–N19 the composition is skewed to basic residues. Residues M1 to A24 are disordered.

The protein belongs to the bacterial ribosomal protein bL32 family.

It is found in the plastid. The protein localises to the chloroplast. The polypeptide is Large ribosomal subunit protein bL32c (rpl32) (Porphyra purpurea (Red seaweed)).